The sequence spans 61 residues: Small ribosomal subunit protein uS14B (61 aa).

4 residues coordinate Zn(2+): Cys24, Cys27, Cys40, and Cys43.

The protein belongs to the universal ribosomal protein uS14 family. Zinc-binding uS14 subfamily. Part of the 30S ribosomal subunit. Contacts proteins S3 and S10. The cofactor is Zn(2+).

In terms of biological role, binds 16S rRNA, required for the assembly of 30S particles and may also be responsible for determining the conformation of the 16S rRNA at the A site. In Mycolicibacterium smegmatis (strain ATCC 700084 / mc(2)155) (Mycobacterium smegmatis), this protein is Small ribosomal subunit protein uS14B.